The primary structure comprises 82 residues: Conotoxin MiK42 (82 aa).

Positions 1-22 are cleaved as a signal peptide; it reads MKLTCALIVAMLLLTACQLITT. Positions 23–49 are excised as a propeptide; it reads DDFRGRQQYRTARSRTKMQNYKIFRLT. Intrachain disulfides connect cysteine 52-cysteine 67, cysteine 59-cysteine 70, and cysteine 66-cysteine 80.

This sequence belongs to the conotoxin O1 superfamily. Expressed by the venom duct.

The protein resides in the secreted. The chain is Conotoxin MiK42 from Conus miles (Soldier cone).